Here is a 123-residue protein sequence, read N- to C-terminus: Transmembrane protein 254 (123 aa).

3 consecutive transmembrane segments (helical) span residues 15–35, 63–83, and 95–115; these read LFWF…VFWP, NGYW…LVLC, and LLWF…LFAY.

It is found in the membrane. The chain is Transmembrane protein 254 (Tmem254) from Rattus norvegicus (Rat).